The following is a 326-amino-acid chain: N-acetyl-gamma-glutamyl-phosphate reductase (326 aa).

Cys155 is a catalytic residue.

It belongs to the NAGSA dehydrogenase family. Type 1 subfamily.

Its subcellular location is the cytoplasm. It carries out the reaction N-acetyl-L-glutamate 5-semialdehyde + phosphate + NADP(+) = N-acetyl-L-glutamyl 5-phosphate + NADPH + H(+). It participates in amino-acid biosynthesis; L-arginine biosynthesis; N(2)-acetyl-L-ornithine from L-glutamate: step 3/4. Catalyzes the NADPH-dependent reduction of N-acetyl-5-glutamyl phosphate to yield N-acetyl-L-glutamate 5-semialdehyde. The chain is N-acetyl-gamma-glutamyl-phosphate reductase from Shewanella oneidensis (strain ATCC 700550 / JCM 31522 / CIP 106686 / LMG 19005 / NCIMB 14063 / MR-1).